The sequence spans 217 residues: Large ribosomal subunit protein uL3 (217 aa).

Residues 127–162 form a disordered region; the sequence is GFSRGPMSHGSKNHRAPGSTGAGTTPGRIYPGKRMA. The segment covering 142 to 153 has biased composition (low complexity); it reads APGSTGAGTTPG.

The protein belongs to the universal ribosomal protein uL3 family. In terms of assembly, part of the 50S ribosomal subunit. Forms a cluster with proteins L14 and L19.

Its function is as follows. One of the primary rRNA binding proteins, it binds directly near the 3'-end of the 23S rRNA, where it nucleates assembly of the 50S subunit. The sequence is that of Large ribosomal subunit protein uL3 from Prochlorococcus marinus (strain AS9601).